The chain runs to 447 residues: Tyrosine aminotransferase (447 aa).

Residue K273 is modified to N6-(pyridoxal phosphate)lysine. At S441 the chain carries Phosphoserine.

It belongs to the class-I pyridoxal-phosphate-dependent aminotransferase family. Homodimer. Pyridoxal 5'-phosphate serves as cofactor.

It catalyses the reaction L-tyrosine + 2-oxoglutarate = 3-(4-hydroxyphenyl)pyruvate + L-glutamate. Its pathway is amino-acid degradation; L-phenylalanine degradation; acetoacetate and fumarate from L-phenylalanine: step 2/6. Its function is as follows. Transaminase involved in tyrosine breakdown. Converts tyrosine to p-hydroxyphenylpyruvate. Can catalyze the reverse reaction, using glutamic acid, with 2-oxoglutarate as cosubstrate (in vitro). Has much lower affinity and transaminase activity for phenylalanine. This chain is Tyrosine aminotransferase (TAT), found in Bos taurus (Bovine).